We begin with the raw amino-acid sequence, 2099 residues long: Dedicator of cytokinesis protein 8 (2099 aa).

Serine 20, serine 139, and serine 451 each carry phosphoserine. Residues 560 to 729 (RNLLYVYPQR…GVFNIEVQAV (170 aa)) form the C2 DOCK-type domain. A phosphoserine mark is found at serine 904, serine 936, serine 1145, and serine 1243. The 435-residue stretch at 1632-2066 (KSYQASPDLR…LRPMIERKIP (435 aa)) folds into the DOCKER domain. Serine 2087 is subject to Phosphoserine.

The protein belongs to the DOCK family. As to quaternary structure, interacts (via DOCKER domain) with GTPase CDC42; the interaction activates CDC42 by exchanging GDP for GTP. The unphosphorylated form interacts (via DOCKER domain) with LRCH1 (via LRR repeats); the interaction prevents the association between DOCK8 and CDC42. Interacts with CCDC88B. Post-translationally, in response to chemokine CXCL12/SDF-1-alpha stimulation, phosphorylated by PRKCA/PKC-alpha which promotes DOCK8 dissociation from LRCH1. Expressed in peripheral blood mononuclear cells (PBMCs).

The protein resides in the cytoplasm. It localises to the cell membrane. It is found in the cell projection. The protein localises to the lamellipodium membrane. In terms of biological role, guanine nucleotide exchange factor (GEF) which specifically activates small GTPase CDC42 by exchanging bound GDP for free GTP. During immune responses, required for interstitial dendritic cell (DC) migration by locally activating CDC42 at the leading edge membrane of DC. Required for CD4(+) T-cell migration in response to chemokine stimulation by promoting CDC42 activation at T cell leading edge membrane. Is involved in NK cell cytotoxicity by controlling polarization of microtubule-organizing center (MTOC), and possibly regulating CCDC88B-mediated lytic granule transport to MTOC during cell killing. In Homo sapiens (Human), this protein is Dedicator of cytokinesis protein 8 (DOCK8).